Reading from the N-terminus, the 602-residue chain is Sodium- and chloride-dependent GABA transporter 2 (602 aa).

A compositionally biased stretch (polar residues) spans 1–13 (MDSRVSGTTSNGE). The segment at 1-22 (MDSRVSGTTSNGETKPVYPVME) is disordered. The Cytoplasmic portion of the chain corresponds to 1-40 (MDSRVSGTTSNGETKPVYPVMEKKEEDGTLERGHWNNKME). 3 helical membrane passes run 41–61 (FVLS…FPYL), 68–88 (GAFF…VFLL), and 121–141 (IVIL…FYLF). The Extracellular segment spans residues 142-206 (SSFTIDLPWG…GIQHLGALRW (65 aa)). Cysteine 153 and cysteine 162 are disulfide-bonded. Asparagine 173 carries N-linked (GlcNAc...) asparagine glycosylation. 2 helical membrane passes run 207–227 (ELAL…WKGV) and 233–253 (VVYF…IRGV). Asparagine 269 carries N-linked (GlcNAc...) asparagine glycosylation. Helical transmembrane passes span 282 to 302 (AGTQ…ALGS), 319 to 339 (FLNS…LGFM), 366 to 386 (VVML…VVLL), 418 to 438 (VLIL…LTEG), 453 to 473 (GMCL…VYGA), 490 to 510 (PLIK…TFLF), and 528 to 548 (WWGD…IPAW). Topologically, residues 549–602 (SLYRLGTLKGPFRERIRQLMCPAEDLPQRNPAGPSAPATPRTSLLRLTELESHC) are cytoplasmic. A Phosphothreonine modification is found at threonine 587. Phosphoserine is present on serine 591.

It belongs to the sodium:neurotransmitter symporter (SNF) (TC 2.A.22) family. SLC6A13 subfamily. Expressed in brain, kidney, lung, liver and testis.

The protein localises to the cell membrane. It is found in the basolateral cell membrane. The enzyme catalyses 4-aminobutanoate(out) + chloride(out) + 2 Na(+)(out) = 4-aminobutanoate(in) + chloride(in) + 2 Na(+)(in). It carries out the reaction taurine(out) + chloride(out) + 2 Na(+)(out) = taurine(in) + chloride(in) + 2 Na(+)(in). The catalysed reaction is beta-alanine(out) + chloride(out) + 2 Na(+)(out) = beta-alanine(in) + chloride(in) + 2 Na(+)(in). It catalyses the reaction hypotaurine(out) + chloride(out) + 2 Na(+)(out) = hypotaurine(in) + chloride(in) + 2 Na(+)(in). Its activity is regulated as follows. GABA transport is inhibited by beta-alanine, 2,3-diaminopropionic acid and SNAP-5114. Functionally, mediates sodium- and chloride-dependent transport of gamma-aminobutyric acid (GABA). Mediates transport of beta-alanine. Can also mediate transport of taurine and hypotaurine. This chain is Sodium- and chloride-dependent GABA transporter 2 (SLC6A13), found in Homo sapiens (Human).